The following is a 220-amino-acid chain: MRLILLGAPGAGKGTQANFIKEKFGIPQISTGDMLRAAVKAGTPLGVEAKGYMDAGKLVPDALIIGLVKERLKEADCANGYLFDGFPRTIAQADAMKEAGVAIDYVLEIDVPFSEIIERMSGRRTHPASGRTYHVKFNPPKVEGKDDVTGEPLIQRDDDKEETVKKRLEVYEAQTKPLITYYGDWAKRGEENGLKAPQYRKISGLGTVEEIRERAFDALK.

10 to 15 (GAGKGT) contacts ATP. The NMP stretch occupies residues 30-59 (STGDMLRAAVKAGTPLGVEAKGYMDAGKLV). AMP is bound by residues threonine 31, arginine 36, 57–59 (KLV), 85–88 (GFPR), and glutamine 92. Residues 122–159 (GRRTHPASGRTYHVKFNPPKVEGKDDVTGEPLIQRDDD) form an LID region. Residues arginine 123 and 132 to 133 (TY) contribute to the ATP site. AMP-binding residues include arginine 156 and arginine 167. Glycine 206 is a binding site for ATP.

This sequence belongs to the adenylate kinase family. Monomer.

Its subcellular location is the cytoplasm. The enzyme catalyses AMP + ATP = 2 ADP. It participates in purine metabolism; AMP biosynthesis via salvage pathway; AMP from ADP: step 1/1. Catalyzes the reversible transfer of the terminal phosphate group between ATP and AMP. Plays an important role in cellular energy homeostasis and in adenine nucleotide metabolism. The chain is Adenylate kinase from Burkholderia multivorans (strain ATCC 17616 / 249).